We begin with the raw amino-acid sequence, 286 residues long: Aquaporin NIP4-1 (286 aa).

Transmembrane regions (helical) follow at residues 59-79 (VMVEGLASFLVVFWSCVAALM) and 86-106 (LTFPMVCLVVAMTVAFVLSWL). An NPA 1 motif is present at residues 112–114 (NPA). 3 helical membrane passes run 133-153 (LYVAAQLAGSLLACLSVNAVM), 173-193 (LPFLMEFLASAVLMIVIATVA), and 201-221 (TVGGIAIGAAVGGLGLVIGPV). The short motif at 227-229 (NPA) is the NPA 2 element. The helical transmembrane segment at 241–261 (YDGVWIYVVAPVAGMLVGALC) threads the bilayer.

It belongs to the MIP/aquaporin (TC 1.A.8) family. NIP (TC 1.A.8.12) subfamily. Expressed in leaves and at lower levels in roots.

The protein resides in the membrane. Functionally, aquaporins facilitate the transport of water and small neutral solutes across cell membranes. The sequence is that of Aquaporin NIP4-1 (NIP4-1) from Oryza sativa subsp. japonica (Rice).